A 325-amino-acid chain; its full sequence is uncharacterized protein (325 aa).

A chloroplast-targeting transit peptide spans 1–69 (MAMMTTTTTT…KNRRVSVTVS (69 aa)). Residue Ala-70 is modified to N-acetylalanine.

This sequence belongs to the NAD(P)-dependent epimerase/dehydratase family.

The protein resides in the plastid. The protein localises to the chloroplast. This is an uncharacterized protein from Arabidopsis thaliana (Mouse-ear cress).